Reading from the N-terminus, the 1028-residue chain is Serine/threonine-protein kinase fray2 (1028 aa).

The tract at residues 1–67 (MSDDKYHHDK…PKPRKNYPNS (67 aa)) is disordered. Low complexity predominate over residues 20–54 (KQSTAAALSSSSTLASSSSMTTTTTTTSTTTTAAS). Positions 71-330 (YELKETIGKG…PSKLLEHRFF (260 aa)) constitute a Protein kinase domain. Residues 77 to 85 (IGKGGSGLV) and lysine 100 contribute to the ATP site. The Proton acceptor role is filled by aspartate 195. The residue at position 230 (threonine 230) is a Phosphothreonine; by autocatalysis. A compositionally biased stretch (polar residues) spans 368–381 (TSSPQFDTGHSNSA). Disordered stretches follow at residues 368-467 (TSSP…STVV), 486-561 (AYHQ…LQQP), and 580-914 (DLIT…IQSK). 2 stretches are compositionally biased toward low complexity: residues 387 to 419 (PNENNDNNNSSTTTTTTTTTTTNPSNNNNNNNN) and 432 to 458 (TPSHTPSTSPGSTPSHSRTSTPTSNHT). 2 stretches are compositionally biased toward polar residues: residues 503 to 518 (IPNHNASSNLGASAHS) and 528 to 542 (IHPTSSAASTTVVNN). The span at 543–561 (TQQPQTLQPPQQQHQLQQP) shows a compositional bias: low complexity. The span at 595–616 (IPSSSSHGNIPSLVTTSPKSPL) shows a compositional bias: polar residues. 2 stretches are compositionally biased toward low complexity: residues 617–642 (QHQQQIPQQQQDPAMINSNNSSISSN) and 683–700 (SSRASSLSESSDSTSHTS). Basic and acidic residues-rich tracts occupy residues 701–714 (SSDEHSSRYESDRK), 728–742 (SKRDRERERDRDRSN), 753–855 (VSRD…DRSR), and 865–893 (SRDSRNKSRDRSSDSDRSRDRSRDRDYKS).

It belongs to the protein kinase superfamily. STE Ser/Thr protein kinase family. STE20 subfamily. The cofactor is Mn(2+). In terms of processing, undergoes autophosphorylation in the catalytic domain.

The catalysed reaction is L-seryl-[protein] + ATP = O-phospho-L-seryl-[protein] + ADP + H(+). It carries out the reaction L-threonyl-[protein] + ATP = O-phospho-L-threonyl-[protein] + ADP + H(+). This chain is Serine/threonine-protein kinase fray2, found in Dictyostelium discoideum (Social amoeba).